Reading from the N-terminus, the 170-residue chain is Tubulin polymerization-promoting protein family member 2 (170 aa).

A compositionally biased stretch (low complexity) spans 105 to 117 (TTGVTKSTTVGGV). Residues 105-170 (TTGVTKSTTV…GAGTYDKKNQ (66 aa)) form a disordered region. The segment covering 129-149 (THKERFDESGKGKGIEGREET) has biased composition (basic and acidic residues).

It belongs to the TPPP family. In terms of tissue distribution, only expressed in male reproductive organs, including testis. Expressed in elongating spermatids at stages IV-VIII of the seminiferous epithelial cycle in testis and in mature sperm in the epididymis.

Its subcellular location is the cytoplasm. It localises to the cytosol. The protein resides in the cell projection. It is found in the cilium. The protein localises to the flagellum. Functionally, probable regulator of microtubule dynamics required for sperm motility. In contrast to other members of the family, has no microtubule bundling activity. This chain is Tubulin polymerization-promoting protein family member 2, found in Mus musculus (Mouse).